Here is a 474-residue protein sequence, read N- to C-terminus: PTS system N-acetylmuramic acid-specific EIIBC component (474 aa).

Residues 1–89 (MAKEISSELL…SELLGEAPVQ (89 aa)) form the PTS EIIB type-1 domain. Residues 1 to 123 (MAKEISSELL…LAKFATIFTP (123 aa)) lie on the Cytoplasmic side of the membrane. The active-site Phosphocysteine intermediate; for EIIB activity is the C29. The PTS EIIC type-1 domain maps to 115–474 (AKFATIFTPL…LFGCRNVNLD (360 aa)). A helical membrane pass occupies residues 124-144 (LIPGFIAAGLLLGIATLIATV). Topologically, residues 145–157 (MHVPADAQGTLPD) are periplasmic. Residues 158–178 (ALNFMKVFSKGLFTFLVILVG) form a helical membrane-spanning segment. The Cytoplasmic segment spans residues 179 to 180 (YN). The helical transmembrane segment at 181–201 (AAQAFGGTGVNGAIIAALFLL) threads the bilayer. At 202–217 (GYNPAATTGYYAGFHD) the chain is on the periplasmic side. Residues 218-238 (FFGLPIDPRGNIIGVLIAAWA) form a helical membrane-spanning segment. Over 239–260 (CARIEGMVRRFMPDDLDMLLTS) the chain is Cytoplasmic. The helical transmembrane segment at 261–281 (LITLLITATLAYLIIMPLGGW) threads the bilayer. Residues 282–301 (LFEGMSWLFMHLNSNPFGCA) are Periplasmic-facing. Residues 302 to 322 (VLAGLFLIAVVFGVHQGFIPV) form a helical membrane-spanning segment. Over 323–334 (YLALMDSQGFNS) the chain is Cytoplasmic. Residues 335–355 (LFPILSMAGAGQVGAALALYW) form a helical membrane-spanning segment. Over 356-368 (RAQPHSALRSQVR) the chain is Periplasmic. Residues 369–389 (GAIIPGLLGVGEPLIYGVTLP) form a helical membrane-spanning segment. At 390 to 393 (RMKP) the chain is on the cytoplasmic side. A helical membrane pass occupies residues 394–414 (FVTACLGGAAGGLFIGLIAWW). The Periplasmic portion of the chain corresponds to 415 to 440 (GLPMGLNSAFGPSGLVALPLMTSAQG). Residues 441 to 461 (ILPAMAVYAGGILVAWVCGFI) traverse the membrane as a helical segment. Residues 462-474 (FTTLFGCRNVNLD) lie on the Cytoplasmic side of the membrane.

Its subcellular location is the cell inner membrane. The catalysed reaction is N-acetyl-beta-D-muramate(out) + N(pros)-phospho-L-histidyl-[protein] = N-acetyl-beta-D-muramate 6-phosphate(in) + L-histidyl-[protein]. The phosphoenolpyruvate-dependent sugar phosphotransferase system (sugar PTS), a major carbohydrate active transport system, catalyzes the phosphorylation of incoming sugar substrates concomitantly with their translocation across the cell membrane. This system is involved in N-acetylmuramic acid (MurNAc) transport, yielding cytoplasmic MurNAc-6-P. Is responsible for growth on MurNAc as the sole source of carbon and energy. Is also able to take up anhydro-N-acetylmuramic acid (anhMurNAc), but cannot phosphorylate the carbon 6, probably because of the 1,6-anhydro ring. The polypeptide is PTS system N-acetylmuramic acid-specific EIIBC component (murP) (Escherichia coli (strain K12)).